Reading from the N-terminus, the 323-residue chain is tRNA U34 carboxymethyltransferase (323 aa).

Residues Lys91, Trp105, Lys110, Gly130, 152–154 (DPT), 181–182 (IE), Met196, Tyr200, and Arg315 contribute to the carboxy-S-adenosyl-L-methionine site.

The protein belongs to the class I-like SAM-binding methyltransferase superfamily. CmoB family. As to quaternary structure, homotetramer.

The enzyme catalyses carboxy-S-adenosyl-L-methionine + 5-hydroxyuridine(34) in tRNA = 5-carboxymethoxyuridine(34) in tRNA + S-adenosyl-L-homocysteine + H(+). Its function is as follows. Catalyzes carboxymethyl transfer from carboxy-S-adenosyl-L-methionine (Cx-SAM) to 5-hydroxyuridine (ho5U) to form 5-carboxymethoxyuridine (cmo5U) at position 34 in tRNAs. The protein is tRNA U34 carboxymethyltransferase of Photorhabdus laumondii subsp. laumondii (strain DSM 15139 / CIP 105565 / TT01) (Photorhabdus luminescens subsp. laumondii).